A 350-amino-acid chain; its full sequence is Cyclin-O (350 aa).

The segment at 1–89 is disordered; that stretch reads MVTPCPTSPS…GSPLPGPAQP (89 aa). Positions 28–42 are enriched in basic residues; it reads PVKKSRRPRLRRKQP. Ser-81 carries the phosphoserine modification.

Belongs to the cyclin family. In terms of tissue distribution, present in respiratory cells (at protein level).

It localises to the cytoplasm. It is found in the nucleus. The protein localises to the nucleolus. Specifically required for generation of multiciliated cells, possibly by promoting a cell cycle state compatible with centriole amplification and maturation. Acts downstream of MCIDAS to promote mother centriole amplification and maturation in preparation for apical docking. The polypeptide is Cyclin-O (Homo sapiens (Human)).